Consider the following 185-residue polypeptide: Threonylcarbamoyl-AMP synthase (185 aa).

The YrdC-like domain maps to 4–185; it reads SFRVQQAARE…LATGEVVRPG (182 aa).

It belongs to the SUA5 family. TsaC subfamily.

It localises to the cytoplasm. The enzyme catalyses L-threonine + hydrogencarbonate + ATP = L-threonylcarbamoyladenylate + diphosphate + H2O. Required for the formation of a threonylcarbamoyl group on adenosine at position 37 (t(6)A37) in tRNAs that read codons beginning with adenine. Catalyzes the conversion of L-threonine, HCO(3)(-)/CO(2) and ATP to give threonylcarbamoyl-AMP (TC-AMP) as the acyladenylate intermediate, with the release of diphosphate. The polypeptide is Threonylcarbamoyl-AMP synthase (Pseudomonas putida (strain ATCC 47054 / DSM 6125 / CFBP 8728 / NCIMB 11950 / KT2440)).